Here is a 142-residue protein sequence, read N- to C-terminus: Thioredoxin-like protein YLS8 (142 aa).

Belongs to the DIM1 family. In terms of tissue distribution, expressed in roots, leaves, stems, cauline leaves and flowers.

The polypeptide is Thioredoxin-like protein YLS8 (YLS8) (Arabidopsis thaliana (Mouse-ear cress)).